Here is a 103-residue protein sequence, read N- to C-terminus: Large ribosomal subunit protein bL21 (103 aa).

Belongs to the bacterial ribosomal protein bL21 family. Part of the 50S ribosomal subunit. Contacts protein L20.

Its function is as follows. This protein binds to 23S rRNA in the presence of protein L20. In Wolinella succinogenes (strain ATCC 29543 / DSM 1740 / CCUG 13145 / JCM 31913 / LMG 7466 / NCTC 11488 / FDC 602W) (Vibrio succinogenes), this protein is Large ribosomal subunit protein bL21.